The following is a 131-amino-acid chain: UPF0134 protein MPN_010 (131 aa).

This sequence belongs to the UPF0134 family.

This Mycoplasma pneumoniae (strain ATCC 29342 / M129 / Subtype 1) (Mycoplasmoides pneumoniae) protein is UPF0134 protein MPN_010.